Consider the following 386-residue polypeptide: S-adenosylmethionine synthase (386 aa).

Position 16 (histidine 16) interacts with ATP. Aspartate 18 contributes to the Mg(2+) binding site. Glutamate 44 contributes to the K(+) binding site. Residues glutamate 57 and glutamine 100 each coordinate L-methionine. The segment at 100-110 is flexible loop; the sequence is QSRDITQGVDR. ATP-binding positions include 165 to 167, aspartate 240, 246 to 247, alanine 263, and lysine 267; these read DAK and RK. Residue aspartate 240 coordinates L-methionine. Lysine 271 is a binding site for L-methionine.

This sequence belongs to the AdoMet synthase family. In terms of assembly, homotetramer; dimer of dimers. It depends on Mg(2+) as a cofactor. K(+) is required as a cofactor.

The protein resides in the cytoplasm. The catalysed reaction is L-methionine + ATP + H2O = S-adenosyl-L-methionine + phosphate + diphosphate. It participates in amino-acid biosynthesis; S-adenosyl-L-methionine biosynthesis; S-adenosyl-L-methionine from L-methionine: step 1/1. Its function is as follows. Catalyzes the formation of S-adenosylmethionine (AdoMet) from methionine and ATP. The overall synthetic reaction is composed of two sequential steps, AdoMet formation and the subsequent tripolyphosphate hydrolysis which occurs prior to release of AdoMet from the enzyme. In Francisella tularensis subsp. tularensis (strain WY96-3418), this protein is S-adenosylmethionine synthase.